The following is a 193-amino-acid chain: RNA pyrophosphohydrolase (193 aa).

The Nudix hydrolase domain maps to 6–149 (GFRPNVGIIL…KRDVYQRALQ (144 aa)). The Nudix box signature appears at 38–59 (GGIKFGETPEQAMFRELEEEVG). The tract at residues 174-193 (THSARKTDEPSTEQTKPNNE) is disordered.

Belongs to the Nudix hydrolase family. RppH subfamily. A divalent metal cation is required as a cofactor.

Accelerates the degradation of transcripts by removing pyrophosphate from the 5'-end of triphosphorylated RNA, leading to a more labile monophosphorylated state that can stimulate subsequent ribonuclease cleavage. The protein is RNA pyrophosphohydrolase of Herminiimonas arsenicoxydans.